A 372-amino-acid chain; its full sequence is Biglycan (372 aa).

The N-terminal stretch at 1 to 19 (MPTMWPLWLLASLLALSQA) is a signal peptide. A propeptide spanning residues 20–40 (LPFEQKGFWDFTLDDGLPMLN) is cleaved from the precursor. Residues serine 45 and serine 51 are each glycosylated (O-linked (Xyl...) (glycosaminoglycan) serine). Cystine bridges form between cysteine 67–cysteine 73 and cysteine 71–cysteine 80. 12 LRR repeats span residues 86–106 (KAVP…NNEI), 107–130 (SELR…NNKI), 131–154 (SKIH…KNHL), 155–175 (VEIP…DNRI), 176–199 (RKVP…GNPL), 200–224 (ENSG…EAKL), 225–245 (TGIP…HNKI), 246–269 (QAIE…HNQI), 270–293 (RMIE…NNKL), 294–316 (SRVP…TNNI), 317–346 (TKVG…NNPV), and 347–372 (PYWE…NYKK). 2 N-linked (GlcNAc...) asparagine glycosylation sites follow: asparagine 274 and asparagine 315. Cysteine 325 and cysteine 358 are joined by a disulfide.

It belongs to the small leucine-rich proteoglycan (SLRP) family. SLRP class I subfamily. Homodimer. Forms a ternary complex with MFAP2 and ELN. The two attached glycosaminoglycan chains can be either chondroitin sulfate or dermatan sulfate.

The protein localises to the secreted. It is found in the extracellular space. It localises to the extracellular matrix. May be involved in collagen fiber assembly. The polypeptide is Biglycan (BGN) (Equus caballus (Horse)).